A 125-amino-acid polypeptide reads, in one-letter code: Large ribosomal subunit protein bL12 (125 aa).

The protein belongs to the bacterial ribosomal protein bL12 family. Homodimer. Part of the ribosomal stalk of the 50S ribosomal subunit. Forms a multimeric L10(L12)X complex, where L10 forms an elongated spine to which 2 to 4 L12 dimers bind in a sequential fashion. Binds GTP-bound translation factors.

Functionally, forms part of the ribosomal stalk which helps the ribosome interact with GTP-bound translation factors. Is thus essential for accurate translation. This Variovorax paradoxus (strain S110) protein is Large ribosomal subunit protein bL12.